The chain runs to 451 residues: uncharacterized protein (451 aa).

The 59-residue stretch at 1 to 59 (MLHKNDIIETEISDISHEGMGIAKVDGFVFFVENALPGEIIKMRVLKLRKRIGYGKVEE) folds into the TRAM domain. S-adenosyl-L-methionine-binding residues include Gln-283, Tyr-312, Glu-333, and Asp-381. Residue Cys-408 is the Nucleophile of the active site.

The protein belongs to the class I-like SAM-binding methyltransferase superfamily. RNA M5U methyltransferase family.

This is an uncharacterized protein from Streptococcus agalactiae serotype V (strain ATCC BAA-611 / 2603 V/R).